The following is a 414-amino-acid chain: Probable sugar phosphate/phosphate translocator At1g06470 (414 aa).

The next 9 membrane-spanning stretches (helical) occupy residues 72-92 (VLKTLFFILVWYTFSTFLTLY), 101-121 (LGKFPAPLLMNTIHFSIQAVL), 172-192 (TFATMCKSAAPIFLLLFAFAF), 197-217 (PSLKLFGIISVISAGVLLTVA), 224-244 (FWGFVFVMLAAVMSGFRWCMT), 259-279 (FIFMSCVAPVMAIATGLLSLL), 303-323 (FLMLFGGALAFCMVLTEYVLV), 328-348 (AVTVTIAGVVKEAVTIVVAVF), and 354-374 (FTWLKGVGLMIIMVGVSLFNW). The region spanning 106 to 216 (APLLMNTIHF…VISAGVLLTV (111 aa)) is the EamA domain.

Belongs to the TPT transporter family. TPT (TC 2.A.7.9) subfamily.

The protein resides in the membrane. In Arabidopsis thaliana (Mouse-ear cress), this protein is Probable sugar phosphate/phosphate translocator At1g06470.